The sequence spans 556 residues: Phosphoacetylglucosamine mutase (556 aa).

Serine 68 acts as the Phosphoserine intermediate in catalysis. The Mg(2+) site is built by serine 68, aspartate 286, aspartate 288, and aspartate 290. At serine 68 the chain carries Phosphoserine. Substrate-binding positions include 386 to 388 (EAN), 518 to 522 (RPSGT), and arginine 527.

The protein belongs to the phosphohexose mutase family. The cofactor is Mg(2+).

It catalyses the reaction N-acetyl-alpha-D-glucosamine 1-phosphate = N-acetyl-D-glucosamine 6-phosphate. The protein operates within nucleotide-sugar biosynthesis; UDP-N-acetyl-alpha-D-glucosamine biosynthesis; N-acetyl-alpha-D-glucosamine 1-phosphate from alpha-D-glucosamine 6-phosphate (route I): step 2/2. Its function is as follows. Interconverts GlcNAc-6-P and GlcNAc-1-P. This is Phosphoacetylglucosamine mutase (DRT101) from Arabidopsis thaliana (Mouse-ear cress).